Reading from the N-terminus, the 283-residue chain is DNA repair protein RecO (283 aa).

The span at 254-264 (SSPASVGSSAT) shows a compositional bias: polar residues. The disordered stretch occupies residues 254-283 (SSPASVGSSATRYFAQGDTDENDRDPPGAR).

The protein belongs to the RecO family.

Involved in DNA repair and RecF pathway recombination. In Roseiflexus sp. (strain RS-1), this protein is DNA repair protein RecO.